The following is a 195-amino-acid chain: MGSQSSKAPRGDVTAEEAAGASPAKANGQENGHVKSNGDLSPKGEGESPPVNGTDEAAGATGDAIEPAPPSQGAEAKGEVPPKETPKKKKKFSFKKPFKLSGLSFKRNRKEGGGDSSASSPTEEEQEQGEIGACSDEGTAQEGKAAATPESQEPQAKGAEASAASEEEAGPQATEPSTPSGPESGPTPASAEQNE.

Residues 1–195 (MGSQSSKAPR…PTPASAEQNE (195 aa)) form a disordered region. Gly-2 carries N-myristoyl glycine lipidation. Phosphothreonine is present on Thr-14. A compositionally biased stretch (low complexity) spans 16-26 (EEAAGASPAKA). Phosphoserine is present on residues Ser-22, Ser-36, Ser-41, and Ser-48. A compositionally biased stretch (low complexity) spans 53 to 64 (GTDEAAGATGDA). A Phosphoserine modification is found at Ser-71. Positions 76–85 (AKGEVPPKET) are enriched in basic and acidic residues. Thr-85 bears the Phosphothreonine mark. A compositionally biased stretch (basic residues) spans 86–98 (PKKKKKFSFKKPF). An effector domain involved in lipid-binding and calmodulin-binding region spans residues 87-110 (KKKKKFSFKKPFKLSGLSFKRNRK). 6 positions are modified to phosphoserine: Ser-93, Ser-101, Ser-104, Ser-119, Ser-120, and Ser-135. At Thr-148 the chain carries Phosphothreonine. A phosphoserine mark is found at Ser-151, Ser-162, and Ser-165. A compositionally biased stretch (low complexity) spans 153–195 (EPQAKGAEASAASEEEAGPQATEPSTPSGPESGPTPASAEQNE). Thr-178 and Thr-187 each carry phosphothreonine.

This sequence belongs to the MARCKS family. Binds to filamentous actin (F-actin), but not to monomeric G-actin, independently of its phosphorylation status. Phosphorylated. Phosphorylation at Ser-120 and Thr-178 is non-redundantly catalyzed by MAPK8 in vivo. Phosphorylation at Thr-148 is preferentially catalyzed by MAPK8 in vivo, but this modification can also be catalyzed by other kinases in the absence of MAPK8. May be phosphorylated by protein kinase C, which disrupts the interaction with calmodulin.

The protein localises to the cytoplasm. It is found in the cytoskeleton. The protein resides in the cell membrane. Controls cell movement by regulating actin cytoskeleton homeostasis and filopodium and lamellipodium formation. When unphosphorylated, induces cell migration. When phosphorylated by MAPK8, induces actin bundles formation and stabilization, thereby reducing actin plasticity, hence restricting cell movement, including neuronal migration. May be involved in coupling the protein kinase C and calmodulin signal transduction systems. This Homo sapiens (Human) protein is MARCKS-related protein (MARCKSL1).